The chain runs to 241 residues: tRNA pseudouridine synthase A (241 aa).

The active-site Nucleophile is aspartate 51. Tyrosine 110 is a substrate binding site.

It belongs to the tRNA pseudouridine synthase TruA family. As to quaternary structure, homodimer.

The enzyme catalyses uridine(38/39/40) in tRNA = pseudouridine(38/39/40) in tRNA. Its function is as follows. Formation of pseudouridine at positions 38, 39 and 40 in the anticodon stem and loop of transfer RNAs. The chain is tRNA pseudouridine synthase A from Campylobacter jejuni subsp. doylei (strain ATCC BAA-1458 / RM4099 / 269.97).